We begin with the raw amino-acid sequence, 160 residues long: Putative flagellin YvzB (160 aa).

This sequence belongs to the bacterial flagellin family. As to quaternary structure, interacts with FliW.

Its subcellular location is the bacterial flagellum. This is Putative flagellin YvzB (yvzB) from Bacillus subtilis (strain 168).